A 210-amino-acid polypeptide reads, in one-letter code: A-kinase-interacting protein 1 (210 aa).

Disordered regions lie at residues histidine 58 to proline 80 and glutamine 136 to glutamine 162.

In terms of assembly, interacts with PRKACA and RELA. As to expression, expressed at high levels in adult heart and at lower levels in brain, testis, ovary and skeletal muscle. Up-regulated in some breast cancer cell lines. Isoform 1 and isoform 3 are expressed in fetal brain.

It is found in the nucleus. Its function is as follows. Enhances NF-kappa-B transcriptional activity by regulating the nuclear localization of the NF-kappa-B subunit RELA and promoting the phosphorylation of RELA by PRKACA. Regulates the effect of the cAMP-dependent protein kinase signaling pathway on the NF-kappa-B activation cascade. This chain is A-kinase-interacting protein 1 (AKIP1), found in Homo sapiens (Human).